Here is a 203-residue protein sequence, read N- to C-terminus: MQIKEPLRVGIGGPVGSGKTALTLALCQRLRNVYNIAVVTNDIYTREDAEFLTRNEALAPERIIGVETGGCPHTAIREDASMNLEAVAQLSERFNPLDIVFVESGGDNLAATFSPELSDLTIYVIDVAAGEKIPRKGGPGITKSDLLVINKIDLAPMVGASLEVMEKDARRMRGERPFIFTNLKRGQGLEDIVGFIEKQGLML.

13–20 contacts GTP; the sequence is GPVGSGKT.

Belongs to the SIMIBI class G3E GTPase family. UreG subfamily. Homodimer. UreD, UreF and UreG form a complex that acts as a GTP-hydrolysis-dependent molecular chaperone, activating the urease apoprotein by helping to assemble the nickel containing metallocenter of UreC. The UreE protein probably delivers the nickel.

Its subcellular location is the cytoplasm. Functionally, facilitates the functional incorporation of the urease nickel metallocenter. This process requires GTP hydrolysis, probably effectuated by UreG. The chain is Urease accessory protein UreG from Methylobacillus flagellatus (strain ATCC 51484 / DSM 6875 / VKM B-1610 / KT).